The chain runs to 695 residues: Probable pre-mRNA-splicing factor ATP-dependent RNA helicase DEAH9 (695 aa).

Positions leucine 58 to proline 223 constitute a Helicase ATP-binding domain. Glycine 71–threonine 78 contributes to the ATP binding site. The short motif at aspartate 170–histidine 173 is the DEAH box element. A Helicase C-terminal domain is found at serine 261–glycine 438.

Belongs to the DEAD box helicase family. DEAH subfamily. DDX35 sub-subfamily.

It catalyses the reaction ATP + H2O = ADP + phosphate + H(+). Functionally, may be involved in pre-mRNA splicing. This is Probable pre-mRNA-splicing factor ATP-dependent RNA helicase DEAH9 from Arabidopsis thaliana (Mouse-ear cress).